A 353-amino-acid polypeptide reads, in one-letter code: Cyclin-dependent kinase-like 1 (353 aa).

The Protein kinase domain occupies 4 to 286; it reads YDRLSKLGEG…CSELMLHGIF (283 aa). ATP-binding positions include 10–18 and lysine 33; that span reads LGEGSYGVV. The active-site Proton acceptor is aspartate 126. Residues 331–353 form a disordered region; that stretch reads GGNHGNNNNNGNGINRNFLPTIS. Residues 335–347 show a composition bias toward low complexity; the sequence is GNNNNNGNGINRN.

It belongs to the protein kinase superfamily. Ser/Thr protein kinase family. Specifically expressed in head and tail ciliated sensory neurons.

The protein resides in the cell projection. It localises to the cilium. It catalyses the reaction L-seryl-[protein] + ATP = O-phospho-L-seryl-[protein] + ADP + H(+). The enzyme catalyses L-threonyl-[protein] + ATP = O-phospho-L-threonyl-[protein] + ADP + H(+). Functionally, modulates cilium assembly. The sequence is that of Cyclin-dependent kinase-like 1 from Caenorhabditis elegans.